A 291-amino-acid polypeptide reads, in one-letter code: Beta-lactamase CTX-M-6 (291 aa).

The signal sequence occupies residues 1–28 (MMTQSIRRSMLTVMATLPLLFSSATLHA). The active-site Acyl-ester intermediate is S73. 237-239 (KTG) is a substrate binding site.

Belongs to the class-A beta-lactamase family.

It catalyses the reaction a beta-lactam + H2O = a substituted beta-amino acid. Its function is as follows. Has cefotaxime-hydrolyzing activity. This Salmonella typhimurium protein is Beta-lactamase CTX-M-6 (bla).